A 1535-amino-acid polypeptide reads, in one-letter code: Lysine-specific demethylase 5D (1535 aa).

One can recognise a JmjN domain in the interval 14–55; it reads CPVFEPSWAEFQDPLGYIAKIRPIAEKSGICKIRPPADWQPP. An ARID domain is found at 79–169; the sequence is TRVKLNYLDQ…IIYPYEMFQS (91 aa). The disordered stretch occupies residues 192–227; the sequence is PHSIPLRQSVQPSKFSSYSRRAKRLQPDPEPTEEDI. Residues 197-210 show a composition bias toward polar residues; it reads LRQSVQPSKFSSYS. Glycyl lysine isopeptide (Lys-Gly) (interchain with G-Cter in SUMO2) cross-links involve residues lysine 205, lysine 229, lysine 244, and lysine 272. Residues serine 291 and serine 307 each carry the phosphoserine modification. A PHD-type 1 zinc finger spans residues 314 to 364; the sequence is SYICQVCSRGDEDDKLLFCDGCDDNYHIFCLLPPLPEIPRGIWRCPKCILA. Tyrosine 430 contacts 2-oxoglutarate. Positions 458–624 constitute a JmjC domain; it reads EYATSGWNLN…AGRQCIEHYR (167 aa). 2 residues coordinate Fe cation: histidine 504 and glutamate 506. The 2-oxoglutarate site is built by serine 512, asparagine 514, and lysine 522. Histidine 592 contacts Fe cation. The C5HC2 zinc-finger motif lies at 697 to 749; the sequence is CIKCKTTCFLSALACYDCPDGLVCLSHINDLCKCSSSRQYLRYRYTLDELPTM. Residue serine 884 is modified to Phosphoserine. The segment at 1174–1235 adopts a PHD-type 2 zinc-finger fold; sequence ICVCGQVPAG…DTKFLCPLCM (62 aa). Phosphoserine is present on serine 1342. The disordered stretch occupies residues 1425–1519; the sequence is HQGSRTRSRA…KDSGSSAACP (95 aa). The segment covering 1428-1441 has biased composition (basic residues); that stretch reads SRTRSRALERRRRQ. Residues 1473–1487 are compositionally biased toward basic and acidic residues; sequence GREEEHYQEKADREN. Residues 1490–1517 show a composition bias toward polar residues; the sequence is LTPSTDHSPSLKGNQNSLQHKDSGSSAA.

Belongs to the JARID1 histone demethylase family. In terms of assembly, interacts withPCGF6, MSH5, ZMYND8, AR. The cofactor is L-ascorbate. It depends on Fe(2+) as a cofactor.

Its subcellular location is the nucleus. The catalysed reaction is N(6),N(6),N(6)-trimethyl-L-lysyl(4)-[histone H3] + 3 2-oxoglutarate + 3 O2 = L-lysyl(4)-[histone H3] + 3 formaldehyde + 3 succinate + 3 CO2. Its function is as follows. Histone demethylase that specifically demethylates 'Lys-4' of histone H3, thereby playing a central role in histone code. Does not demethylate histone H3 'Lys-9', H3 'Lys-27', H3 'Lys-36', H3 'Lys-79' or H4 'Lys-20'. Demethylates trimethylated and dimethylated but not monomethylated H3 'Lys-4'. May play a role in spermatogenesis. Involved in transcriptional repression of diverse metastasis-associated genes; in this function seems to cooperate with ZMYND8. Suppresses prostate cancer cell invasion. Regulates androgen receptor (AR) transcriptional activity by demethylating H3K4me3 active transcription marks. This is Lysine-specific demethylase 5D (KDM5D) from Pan troglodytes (Chimpanzee).